The primary structure comprises 347 residues: NADH-ubiquinone oxidoreductase chain 2 (347 aa).

The next 11 membrane-spanning stretches (helical) occupy residues 3 to 23 (PPIL…VMLS), 25 to 45 (HWLL…PVLM), 66 to 86 (ASML…QWVV), 96 to 116 (IMMT…FWVP), 122 to 142 (ITLT…MSVL), 149 to 169 (INTN…GWGG), 178 to 198 (IMAY…IYNP), 201 to 221 (MILN…LFML), 237 to 257 (FPLI…LPPL), 274 to 294 (NMII…YFYL), and 323 to 343 (TILL…TPML).

The protein belongs to the complex I subunit 2 family. Core subunit of respiratory chain NADH dehydrogenase (Complex I) which is composed of 45 different subunits. Interacts with TMEM242.

The protein localises to the mitochondrion inner membrane. It catalyses the reaction a ubiquinone + NADH + 5 H(+)(in) = a ubiquinol + NAD(+) + 4 H(+)(out). Core subunit of the mitochondrial membrane respiratory chain NADH dehydrogenase (Complex I) which catalyzes electron transfer from NADH through the respiratory chain, using ubiquinone as an electron acceptor. Essential for the catalytic activity and assembly of complex I. The polypeptide is NADH-ubiquinone oxidoreductase chain 2 (Canis rufus (Red wolf)).